The primary structure comprises 125 residues: Glutamyl-tRNA(Gln) amidotransferase subunit C, mitochondrial (125 aa).

It belongs to the GatC family. In terms of assembly, subunit of the heterotrimeric GatCAB amidotransferase (AdT) complex, composed of A, B and C subunits.

The protein resides in the mitochondrion. It carries out the reaction L-glutamyl-tRNA(Gln) + L-glutamine + ATP + H2O = L-glutaminyl-tRNA(Gln) + L-glutamate + ADP + phosphate + H(+). Its function is as follows. Allows the formation of correctly charged Gln-tRNA(Gln) through the transamidation of misacylated Glu-tRNA(Gln) in the mitochondria. The reaction takes place in the presence of glutamine and ATP through an activated gamma-phospho-Glu-tRNA(Gln). The protein is Glutamyl-tRNA(Gln) amidotransferase subunit C, mitochondrial of Drosophila mojavensis (Fruit fly).